The following is a 615-amino-acid chain: Sodium-dependent neutral amino acid transporter B(0)AT3 (615 aa).

Over 1–26 (MAQASGMDPLVDIEDERPKWDNKLQY) the chain is Cytoplasmic. Residues 27–47 (LLSCIGFAVGLGNIWRFPYLC) form a helical membrane-spanning segment. At 48 to 52 (HTHGG) the chain is on the extracellular side. The helical transmembrane segment at 53 to 73 (GAFLIPYFIALVFEGIPLFYI) threads the bilayer. Topologically, residues 74–105 (ELAIGQRLRRGSIGVWKTISPYLGGVGLGCFS) are cytoplasmic. Residues 106-126 (VSFLVSLYYNTILLWVLWFFL) traverse the membrane as a helical segment. The Extracellular segment spans residues 127–177 (NSFQHPLPWSTCPLDLNRTGFVQECQSSGTVSYFWYRQTLNITSDISNTGT). Asn-143 and Asn-167 each carry an N-linked (GlcNAc...) asparagine glycan. The chain crosses the membrane as a helical span at residues 178 to 198 (IQWKLFLCLVACWTTVYLCVI). Residues 199–206 (RGIESTGK) lie on the Cytoplasmic side of the membrane. The helical transmembrane segment at 207–227 (VIYFTALFPYLVLTIFLIRGL) threads the bilayer. The Extracellular portion of the chain corresponds to 228 to 255 (TLPGATEGLTYLFTPNMKILQNSRVWLD). The helical transmembrane segment at 256 to 276 (AATQIFFSLSLAFGGHIAFAS) threads the bilayer. The Cytoplasmic portion of the chain corresponds to 277–290 (YNQPRNNCEKDAVT). A helical membrane pass occupies residues 291-311 (IALVNSMTSLYASITIFSIMG). Residues 312-397 (FKASNDYGRC…FTEAVLHMPG (86 aa)) are Extracellular-facing. Asn-353 is a glycosylation site (N-linked (GlcNAc...) asparagine). The helical transmembrane segment at 398–418 (ASVWSVLFFGMLFTLGLSSMF) threads the bilayer. The Cytoplasmic segment spans residues 419 to 442 (GNMEGVITPLFDMGILPKGVPKET). A helical membrane pass occupies residues 443-463 (MTGVVCFICFLSAICFTLQSG). Topologically, residues 464–472 (SYWLEIFDS) are extracellular. The helical transmembrane segment at 473-493 (FAASLNLIIFAFMEVVGVIHV) threads the bilayer. Topologically, residues 494–520 (YGIKRFCDDIEWMTGRRPSLYWQVTWR) are cytoplasmic. The helical transmembrane segment at 521–541 (VVSPMLLFGIFLSYIVLLAQS) threads the bilayer. Residues 542-571 (SPSYKAWNPQYEHFPSREEKLYPGWVQVTC) lie on the Extracellular side of the membrane. Residues 572–592 (VLLSFLPSLWVPGIALAQLLF) traverse the membrane as a helical segment. Residues 593 to 615 (QYRQRWKNTHLESALKPQESRGC) lie on the Cytoplasmic side of the membrane.

The protein belongs to the sodium:neurotransmitter symporter (SNF) (TC 2.A.22) family. SLC6A18 subfamily. As to quaternary structure, interacts with CLTRN; this interaction regulates the trafficking of SLC6A18 to the cell membrane and its activity. In terms of tissue distribution, kidney-specific expression.

The protein localises to the apical cell membrane. It is found in the cell membrane. It catalyses the reaction L-alanine(out) + chloride(out) + 2 Na(+)(out) = L-alanine(in) + chloride(in) + 2 Na(+)(in). It carries out the reaction glycine(out) + chloride(out) + 2 Na(+)(out) = glycine(in) + chloride(in) + 2 Na(+)(in). The catalysed reaction is L-methionine(out) + chloride(out) + 2 Na(+)(out) = L-methionine(in) + chloride(in) + 2 Na(+)(in). The enzyme catalyses L-valine(out) + chloride(out) + 2 Na(+)(out) = L-valine(in) + chloride(in) + 2 Na(+)(in). It catalyses the reaction L-isoleucine(out) + chloride(out) + 2 Na(+)(out) = L-isoleucine(in) + chloride(in) + 2 Na(+)(in). It carries out the reaction L-serine(out) + chloride(out) + 2 Na(+)(out) = L-serine(in) + chloride(in) + 2 Na(+)(in). The catalysed reaction is L-leucine(out) + chloride(out) + 2 Na(+)(out) = L-leucine(in) + chloride(in) + 2 Na(+)(in). In terms of biological role, symporter that transports one amino acid molecule together with two sodium and one chloride ions in kidneys and plays a role in the neutral amino acids reabsorption. Preferentially transports neutral amino acids such as L-glycine and L-alanine but also other neutral amino acids. Required CLTRN for cell surface expression and for its amino acid transporter activity. The transport mechanism is pH-independent. This chain is Sodium-dependent neutral amino acid transporter B(0)AT3, found in Rattus norvegicus (Rat).